A 141-amino-acid polypeptide reads, in one-letter code: Acetyltransferase YpeA (141 aa).

One can recognise an N-acetyltransferase domain in the interval 1–141 (MEIRVFRQED…GKRLIEDEEY (141 aa)).

Belongs to the acetyltransferase family. YpeA subfamily.

This is Acetyltransferase YpeA (ypeA) from Escherichia coli (strain K12).